A 783-amino-acid chain; its full sequence is Zinc finger protein 107 (783 aa).

The C2H2-type 1; atypical zinc-finger motif lies at 76-98 (FQCNKYVKVFDKFSNSNRYKRRH). C2H2-type zinc fingers lie at residues 104–126 (FKCKECSKSFCVLSQLTQHRRIH), 132–154 (YKCEECGKAFNWFSTLTKHKRIH), and 160–182 (YKCEECGKAFNQSSQLTRHKIIH). Lysine 186 is covalently cross-linked (Glycyl lysine isopeptide (Lys-Gly) (interchain with G-Cter in SUMO2)). The C2H2-type 5 zinc finger occupies 188-210 (NKCEECGKAFKQASHLTIHKIIH). Residues 216–238 (YKYEECGKVFSQSSHLTTQKILH) form a C2H2-type 6; atypical zinc finger. Residues 244 to 266 (YKCKECGKAFNLFSNLTNHKRIH) form a C2H2-type 7 zinc finger. The C2H2-type 8; atypical zinc-finger motif lies at 272-294 (YKCKECGRAFNISSNLNKQEKIH). The C2H2-type 9; atypical zinc-finger motif lies at 300–322 (NKCEECDKAFNRSLKLTAHKKIL). C2H2-type zinc fingers lie at residues 328-350 (YKCEECGKVFNQFSTLTRHKIIH) and 356-378 (YKCKECGKAFNQSSNLTEHKKIH). The segment at 384–406 (YKCEECGKAFNQHSNLINHRKIY) adopts a C2H2-type 12; atypical zinc-finger fold. C2H2-type zinc fingers lie at residues 412-434 (YKCEECGKAFNRSSTLTRHKKIH), 440-462 (YKCEECDRAFSQSSNLTEHKKIH), 468-490 (YKCEECGKAFNRFSTLTKHKRIH), and 496-518 (YKCEECGKAFNQSYQLTRHKIVH). A C2H2-type 17; atypical zinc finger spans residues 524-546 (NKCEEFGKAFKQSSHRTIHKIIH). The segment at 552–574 (YKCEEHGKVFNQSSNLTTQKIIH) adopts a C2H2-type 18; atypical zinc-finger fold. The segment at 580–602 (YKFEEHGKAFNLFSNITNHKIIY) adopts a C2H2-type 19; atypical zinc-finger fold. 5 C2H2-type zinc fingers span residues 608 to 630 (HKCEECGKAYNRFSNLTIHKRIH), 636 to 658 (YQCAECGKAFNCSSTLNRHKIIH), 664 to 686 (YKCKECGKAFNLSSTLTAHKKIH), 692 to 714 (YKCEECGKAFNQSSNLTTHKKIH), and 720 to 742 (YKCEECGKSFNQFSSLNIHKIIH). Residues 748–770 (YKCGDYGRAFNLSSNLTTHKKIH) form a C2H2-type 25; atypical zinc finger.

Belongs to the krueppel C2H2-type zinc-finger protein family. In terms of tissue distribution, expressed in brain, heart, skeletal muscle, kidney and pancreas. Weakly expressed in aorta, liver and lung.

It localises to the nucleus. Its function is as follows. May be involved in transcriptional regulation. The chain is Zinc finger protein 107 (ZNF107) from Homo sapiens (Human).